We begin with the raw amino-acid sequence, 122 residues long: MRKKSKTPNRAFKVADQIQRDLTELIARELKDPRVGMVTIQAVEVTPDYAHAKVYFSLLAGDPKACTEGLNQAAGFLRAGLFKRLHIHTVPTLHFLFDQTTERAADMNALIARAVASRAKED.

It belongs to the RbfA family. In terms of assembly, monomer. Binds 30S ribosomal subunits, but not 50S ribosomal subunits or 70S ribosomes.

Its subcellular location is the cytoplasm. Its function is as follows. One of several proteins that assist in the late maturation steps of the functional core of the 30S ribosomal subunit. Associates with free 30S ribosomal subunits (but not with 30S subunits that are part of 70S ribosomes or polysomes). Required for efficient processing of 16S rRNA. May interact with the 5'-terminal helix region of 16S rRNA. The chain is Ribosome-binding factor A from Albidiferax ferrireducens (strain ATCC BAA-621 / DSM 15236 / T118) (Rhodoferax ferrireducens).